Consider the following 178-residue polypeptide: Interleukin-1 receptor antagonist protein (178 aa).

The N-terminal stretch at 1 to 26 is a signal peptide; it reads MEICWGPYSHLISLLLILLFHSEAAC. A disulfide bridge links Cys92 with Cys142. An N-linked (GlcNAc...) asparagine glycan is attached at Asn110.

This sequence belongs to the IL-1 family.

The protein localises to the secreted. It localises to the cytoplasm. In terms of biological role, anti-inflammatory antagonist of interleukin-1 family of proinflammatory cytokines such as interleukin-1beta/IL1B and interleukin-1alpha/IL1A. Protects from immune dysregulation and uncontrolled systemic inflammation triggered by IL1 for a range of innate stimulatory agents such as pathogens. This is Interleukin-1 receptor antagonist protein (Il1rn) from Mus musculus (Mouse).